A 480-amino-acid polypeptide reads, in one-letter code: Pyruvate kinase II (480 aa).

Arg-36 contacts substrate. The K(+) site is built by Asn-38, Ser-40, and Asp-70. 38–41 (NFSH) lines the ATP pocket. 2 residues coordinate ATP: Arg-77 and Lys-160. Lys-223 provides a ligand contact to substrate. Glu-225 is a Mg(2+) binding site. Positions 251, 252, and 284 each coordinate substrate. Residue Asp-252 coordinates Mg(2+).

It belongs to the pyruvate kinase family. In terms of assembly, homotetramer. Mg(2+) serves as cofactor. K(+) is required as a cofactor.

It catalyses the reaction pyruvate + ATP = phosphoenolpyruvate + ADP + H(+). Its pathway is carbohydrate degradation; glycolysis; pyruvate from D-glyceraldehyde 3-phosphate: step 5/5. Allosterically activated by AMP and by several sugar phosphates. Belongs to type II PK. Its function is as follows. Catalyzes the formation of pyruvate in the last step of glycolysis, it is irreversible under physiological conditions. The reaction is critical for the control of metabolic flux in the second part of glycolysis. The protein is Pyruvate kinase II (pykA) of Salmonella typhimurium (strain LT2 / SGSC1412 / ATCC 700720).